The sequence spans 441 residues: Cortexillin-2 (441 aa).

An actin-binding region spans residues 1–229 (MDLNKEWEKV…VLYTSLFFHA (229 aa)). 2 consecutive Calponin-homology (CH) domains span residues 9-117 (KVQE…RKYR) and 126-231 (KSSE…HAFR). Coiled-coil stretches lie at residues 229 to 362 (AFRA…RLGL) and 406 to 430 (SFEE…KYLN).

The protein belongs to the cortexillin family. Homodimer; parallel.

The protein localises to the cytoplasm. The protein resides in the cytoskeleton. In terms of biological role, actin-bundling protein. When linked to F-actin the actin filaments form preferentially anti-parallel bundles that associate into meshworks. Plays a major role in cytokinesis. Negatively regulates cortical localization of rapgap1. This is Cortexillin-2 (ctxB) from Dictyostelium discoideum (Social amoeba).